The sequence spans 709 residues: SH3 domain-containing kinase-binding protein 1 (709 aa).

2 SH3 domains span residues 1 to 58 and 98 to 157; these read MVEA…EIKK and RRRR…ELSG. Ser-156, Ser-159, Ser-227, and Ser-274 each carry phosphoserine. Residues 221–239 are compositionally biased toward low complexity; that stretch reads ETTGSESDGGDSSSTKSEG. A disordered region spans residues 221–242; sequence ETTGSESDGGDSSSTKSEGANG. Disordered stretches follow at residues 289-309, 372-485, and 511-650; these read GKKL…MDSR, SDFD…KIDL, and DSVI…VSSQ. Thr-298 carries the post-translational modification Phosphothreonine. The 62-residue stretch at 311–372 folds into the SH3 3 domain; sequence KTKDYCKVIF…PDNFVKLLPS (62 aa). The span at 399–434 shows a compositional bias: basic and acidic residues; that stretch reads TERKHEIKKIPPERPETLPNRTEEKERPEREPKLDL. A Phosphoserine modification is found at Ser-480. Polar residues predominate over residues 513 to 528; the sequence is VISSTEKLSHPTTSRP. Residues 535–554 show a composition bias toward low complexity; the sequence is PPSQSLTSSSLSSPDIFDSP. Ser-553, Ser-555, and Ser-565 each carry phosphoserine. Over residues 561-575 the composition is skewed to basic and acidic residues; it reads EEHISLAHRGIDVSK. Over residues 579-592 the composition is skewed to polar residues; the sequence is KTVTISQVSDNKTS. A compositionally biased stretch (low complexity) spans 600 to 623; sequence MAAASSGPASLSSVASSPMSSSLG. The span at 627–636 shows a compositional bias: polar residues; that stretch reads QRASSPSLFS. Position 631 is a phosphoserine (Ser-631). Positions 646-708 form a coiled coil; that stretch reads AVSSQAAIEE…VNDIKKALQS (63 aa).

As to quaternary structure, can self-associate and form homotetramers. Interacts with CD2, F-actin capping protein, PIK3R3, GRB2, EGFR, MET, BLNK, MAP3K4, PDCD6IP, SPRY2, ARHGAP17, ARHGAP27, CRK, BCAR1, SOS1, ASAP1, ARAP3, HIP1R, SYNJ2, INPP5D and STAP1. Interacts with E3 ubiquitin-protein ligase CBL. Interacts with CBLB, but does not interact with CBLC. Two molecules of SH3KBP1 seem to bind through their respective SH3 1 domain to one molecule of CBLB. The interaction with CBL or CBLB and EGFR is increased upon EGF stimulation. The interaction with CBL is attenuated by PDCD6IP. Interacts (via SH3 domains) with ARAP1. The interaction is independent of EGF and does not affect ARAP1 GTPase-activating activity but is involved in regulating ubiquitination and endocytic trafficking of EGFR. ARAP1 competes with CBL for binding to SH3KBP1 and prevents interaction of CBL with SH3KBP1; this is likely to regulate SH3KBP1-mediated internalization of EGFR. Interacts through its proline-rich region with the SH3 domain of endophilins SH3GL1, SH3GL2 and SH3GL3. The SH3KBP1-endophilin complex seems to associate with a complex containing the phosphorylated receptor (EGFR or MET) and phosphorylated CBL. Probably associates with ASAP1 and phosphorylated EGFR. Probably part of a complex consisting of at least SH3KBP1, ASAP1 and ARAP3. Interacts with focal adhesion kinases PTK2/FAK1 and PTK2B/PYK2, probably as a dimer. Interacts with DAB2 and probably associates with chathrin through its interaction with DAB2. Part of a complex consisting of SH3KBP1, DAB2, and clathrin heavy chain. DAB2 and clathrin dissociate from SH3KBP1 following growth factor treatment, enabling interaction with CBL. Interacts with DDN and probably associates with MAGI2 through its interaction with DDN. Interacts with the SH3 domains of SRC tyrosine-protein kinases SRC, LCK, LYN, FGR, FYN and HCK. Interacts with TRADD, BIRC2, TRAF1, TRAF2 and TNFR1, and the association with a TNFR1-associated complex upon stimulation with TNF-alpha seems to be mediated by SRC. Probably part of a complex consisting of at least SH3KBP1, ASAP1 and ARAP3. Interacts (via SH3 domains) with SHKBP1 (via PXXXPR motifs). Interacts with ATX2. Interaction with CBL is abolished in the presence of SHKBP1. Interacts (via SH3 domains) with ZFP36 (via extreme C-terminal region). Interacts with MAP3K4; this interaction enhances the association with ZFP36. In terms of processing, monoubiquitinated by CBL and CBLB after EGF stimulation; probably on its C-terminus.

It is found in the cytoplasm. The protein resides in the cytoskeleton. The protein localises to the cytoplasmic vesicle membrane. Its subcellular location is the synapse. It localises to the synaptosome. It is found in the cell junction. The protein resides in the focal adhesion. In terms of biological role, adapter protein involved in regulating diverse signal transduction pathways. Involved in the regulation of endocytosis and lysosomal degradation of ligand-induced receptor tyrosine kinases, including EGFR and MET/hepatocyte growth factor receptor, through an association with CBL and endophilins. The association with CBL, and thus the receptor internalization, may be inhibited by an interaction with PDCD6IP and/or SPRY2. Involved in regulation of ligand-dependent endocytosis of the IgE receptor. Attenuates phosphatidylinositol 3-kinase activity by interaction with its regulatory subunit. May be involved in regulation of cell adhesion; promotes the interaction between TTK2B and PDCD6IP. May be involved in the regulation of cellular stress response via the MAPK pathways through its interaction with MAP3K4. Is involved in modulation of tumor necrosis factor mediated apoptosis. Plays a role in the regulation of cell morphology and cytoskeletal organization. Required in the control of cell shape and migration. Has an essential role in the stimulation of B cell activation. This chain is SH3 domain-containing kinase-binding protein 1 (Sh3kbp1), found in Mus musculus (Mouse).